We begin with the raw amino-acid sequence, 184 residues long: Probable RNA 2'-phosphotransferase (184 aa).

It belongs to the KptA/TPT1 family.

Functionally, removes the 2'-phosphate from RNA via an intermediate in which the phosphate is ADP-ribosylated by NAD followed by a presumed transesterification to release the RNA and generate ADP-ribose 1''-2''-cyclic phosphate (APPR&gt;P). May function as an ADP-ribosylase. The polypeptide is Probable RNA 2'-phosphotransferase (Burkholderia pseudomallei (strain K96243)).